The sequence spans 343 residues: Melanoma-associated antigen B18 (343 aa).

Positions 1–17 are enriched in basic residues; that stretch reads MPRGQKSKLRAREKRHQ. The interval 1 to 102 is disordered; it reads MPRGQKSKLR…LGSSREAEGW (102 aa). Residues 67–87 are compositionally biased toward polar residues; that stretch reads APSTTNAIAPVSCSSNEGASS. The span at 88–102 shows a compositional bias: basic and acidic residues; sequence QDEKSLGSSREAEGW. The segment at 100-343 is interaction with LNX1; sequence EGWKEDPLNK…TTSSSFSHAK (244 aa). The region spanning 107–306 is the MAGE domain; sequence LNKKVVSLVH…SAFPSCYEEA (200 aa). Residues 313 to 343 form a disordered region; sequence RTQARAAARAHTAAMANARSRTTSSSFSHAK. Over residues 316 to 333 the composition is skewed to low complexity; that stretch reads ARAAARAHTAAMANARSR. The segment covering 334-343 has biased composition (polar residues); it reads TTSSSFSHAK.

As to quaternary structure, interacts with LNX1.

It is found in the cytoplasm. May enhance ubiquitin ligase activity of RING-type zinc finger-containing E3 ubiquitin-protein ligases. Proposed to act through recruitment and/or stabilization of the Ubl-conjugating enzyme (E2) at the E3:substrate complex. This Homo sapiens (Human) protein is Melanoma-associated antigen B18 (MAGEB18).